The following is a 545-amino-acid chain: Chaperonin GroEL (545 aa).

ATP-binding positions include 29–32 (TMGP), Lys-50, 86–90 (DGTTT), Gly-414, 477–479 (DAA), and Asp-493.

The protein belongs to the chaperonin (HSP60) family. In terms of assembly, forms a cylinder of 14 subunits composed of two heptameric rings stacked back-to-back. Interacts with the co-chaperonin GroES.

The protein resides in the cytoplasm. The catalysed reaction is ATP + H2O + a folded polypeptide = ADP + phosphate + an unfolded polypeptide.. Its function is as follows. Together with its co-chaperonin GroES, plays an essential role in assisting protein folding. The GroEL-GroES system forms a nano-cage that allows encapsulation of the non-native substrate proteins and provides a physical environment optimized to promote and accelerate protein folding. In Campylobacter jejuni (strain RM1221), this protein is Chaperonin GroEL.